A 328-amino-acid polypeptide reads, in one-letter code: Stress response kinase A (328 aa).

The active-site Proton acceptor is D201. Mg(2+) contacts are provided by N206 and D217. D217 is a catalytic residue.

The protein belongs to the SrkA/RdoA protein kinase family. As to quaternary structure, monomer. Mg(2+) serves as cofactor.

The protein resides in the cytoplasm. The enzyme catalyses L-seryl-[protein] + ATP = O-phospho-L-seryl-[protein] + ADP + H(+). The catalysed reaction is L-threonyl-[protein] + ATP = O-phospho-L-threonyl-[protein] + ADP + H(+). In terms of biological role, a protein kinase that phosphorylates Ser and Thr residues. Probably acts to suppress the effects of stress linked to accumulation of reactive oxygen species. Probably involved in the extracytoplasmic stress response. This chain is Stress response kinase A, found in Escherichia coli O157:H7.